The sequence spans 321 residues: Biotin synthase (321 aa).

One can recognise a Radical SAM core domain in the interval 45-271; the sequence is FFGKKVKLNM…INPSKEIRIA (227 aa). Positions 63, 67, and 70 each coordinate [4Fe-4S] cluster. [2Fe-2S] cluster contacts are provided by Cys-106, Cys-139, Cys-199, and Arg-269.

It belongs to the radical SAM superfamily. Biotin synthase family. As to quaternary structure, homodimer. [4Fe-4S] cluster serves as cofactor. [2Fe-2S] cluster is required as a cofactor.

The catalysed reaction is (4R,5S)-dethiobiotin + (sulfur carrier)-SH + 2 reduced [2Fe-2S]-[ferredoxin] + 2 S-adenosyl-L-methionine = (sulfur carrier)-H + biotin + 2 5'-deoxyadenosine + 2 L-methionine + 2 oxidized [2Fe-2S]-[ferredoxin]. Its pathway is cofactor biosynthesis; biotin biosynthesis; biotin from 7,8-diaminononanoate: step 2/2. In terms of biological role, catalyzes the conversion of dethiobiotin (DTB) to biotin by the insertion of a sulfur atom into dethiobiotin via a radical-based mechanism. In Staphylococcus haemolyticus (strain JCSC1435), this protein is Biotin synthase.